We begin with the raw amino-acid sequence, 138 residues long: Glia maturation factor (138 aa).

Residues Asp3–Lys138 enclose the ADF-H domain.

Belongs to the actin-binding proteins ADF family. GMF subfamily. As to expression, in ovaries, expressed in follicular epithelium, in polar cells, migrating border cells, and centripedal cells (at protein level).

It localises to the cell projection. The protein resides in the lamellipodium. It is found in the cytoplasm. Its subcellular location is the perinuclear region. The protein localises to the nucleus. It localises to the cell cortex. In terms of biological role, inhibits Arp2/3-mediated actin nucleation. Together with flr, promotes Arp2/3-nucleated actin filament array disassembly. Promotes debranching. Regulates lamellipodial protrusion dynamics possibly by facilitating lamellipodial retraction. In egg chambers, enhances the retraction dynamics of cellular extensions in border cells and thus together with flr plays an important role in directional migration of border cell clusters. This is Glia maturation factor from Drosophila melanogaster (Fruit fly).